The chain runs to 325 residues: GMP reductase (325 aa).

Residue cysteine 174 is the Thioimidate intermediate of the active site. 203–226 (IIADGGIRTHGDIAKSIRFGATMV) lines the NADP(+) pocket.

It belongs to the IMPDH/GMPR family. GuaC type 2 subfamily.

It carries out the reaction IMP + NH4(+) + NADP(+) = GMP + NADPH + 2 H(+). In terms of biological role, catalyzes the irreversible NADPH-dependent deamination of GMP to IMP. It functions in the conversion of nucleobase, nucleoside and nucleotide derivatives of G to A nucleotides, and in maintaining the intracellular balance of A and G nucleotides. The chain is GMP reductase from Helicobacter pylori (strain J99 / ATCC 700824) (Campylobacter pylori J99).